The sequence spans 139 residues: Holo-[acyl-carrier-protein] synthase (139 aa).

Positions 8 and 61 each coordinate Mg(2+).

The protein belongs to the P-Pant transferase superfamily. AcpS family. Mg(2+) serves as cofactor.

The protein localises to the cytoplasm. The catalysed reaction is apo-[ACP] + CoA = holo-[ACP] + adenosine 3',5'-bisphosphate + H(+). In terms of biological role, transfers the 4'-phosphopantetheine moiety from coenzyme A to a Ser of acyl-carrier-protein. This is Holo-[acyl-carrier-protein] synthase from Rhodopseudomonas palustris (strain BisB5).